The chain runs to 834 residues: Protein kintoun (834 aa).

4 disordered regions span residues 214 to 239 (TAEEQEPHPLAHMFPTKPPAPGKQEP), 374 to 415 (SRED…SVAP), 547 to 669 (KGKV…STGR), and 759 to 834 (KKNQ…EMDD). At Ser378 the chain carries Phosphoserine. Residues 389–398 (PVEEDPDGEL) show a composition bias toward acidic residues. Over residues 552–571 (AKKDNAPLDVKFERNQEGHA) the composition is skewed to basic and acidic residues. The span at 582-596 (EEEEDKENQDQEPES) shows a compositional bias: acidic residues. Residues 597–607 (DQQQQQQVQNK) show a composition bias toward low complexity. Composition is skewed to basic residues over residues 608–619 (KPGKKQRKKNKK) and 759–773 (KKNQKRRDLKLRAQQ). Ser777 is modified (phosphoserine). Over residues 785–798 (EETRGSALKQEENP) the composition is skewed to basic and acidic residues.

It belongs to the PIH1 family. Kintoun subfamily. As to quaternary structure, interacts with Pp1alpha-96A, Pp1-87B, Pp1-13C and flw.

The protein localises to the cytoplasm. Required for cytoplasmic pre-assembly of axonemal dyneins, thereby playing a central role in motility in cilia and flagella. Involved in pre-assembly of dynein arm complexes in the cytoplasm before intraflagellar transport loads them for the ciliary compartment. This is Protein kintoun from Drosophila melanogaster (Fruit fly).